The primary structure comprises 580 residues: XK-related protein 7 (580 aa).

The span at 1–22 (MAAKSDGAAAVAGPGPEGPAGA) shows a compositional bias: low complexity. Positions 1–28 (MAAKSDGAAAVAGPGPEGPAGADRGGAG) are disordered. 8 helical membrane passes run 59–79 (WVLC…WLAA), 89–109 (YFGL…LLSF), 260–280 (LLTA…LASY), 303–323 (VLWH…FASV), 326–346 (LYFG…VIQG), 355–375 (WEEI…WFNV), 384–404 (VTLY…FWYS), and 415–435 (LILV…MCVY). Residues 470 to 516 (TSPPRSLPRTTGAERDGAAVGGERAGTPTPPVFQVRPGLPPTPVARP) are disordered.

Belongs to the XK family.

Its subcellular location is the cell membrane. This is XK-related protein 7 from Rattus norvegicus (Rat).